A 327-amino-acid chain; its full sequence is MAAPRCCVLWRVCGRGWWRATGHCRLPGCHRSWPWATLGTRSLSQEKRAAETHFGFETVSEGEKGSKVYQVFENVAKKYDLMNDMMSLGIHRAWKDLLIRKMHPLPGTQLLDMAGGTGDIAFRFLSYVQAQHQRRQRRQLRTQQNLSWEEIAKKYQNEEDSLGGSLATVCDINREMLKVGKQKALDQGHTAGLAWVLGDAEELPFDDDSFDVYTIAFGIRNVTHIDQALQEAHRVLKPGGRFLCLEFGQVNDPLISRLYDLYSFQVIPVIGEVIAGDWKSYQYLVESIRKFPNQEDFKDMIEDAGFQRVTYENLTTGIVAIHSGFKL.

The N-terminal 49 residues, 1–49, are a transit peptide targeting the mitochondrion; it reads MAAPRCCVLWRVCGRGWWRATGHCRLPGCHRSWPWATLGTRSLSQEKRA. S-adenosyl-L-methionine is bound by residues T117, D171, and 199–200; that span reads DA.

The protein belongs to the class I-like SAM-binding methyltransferase superfamily. MenG/UbiE family. Component of a multi-subunit COQ enzyme complex, composed of at least COQ3, COQ4, COQ5, COQ6, COQ7 and COQ9. Interacts with PYURF; the interaction is direct, stabilizes COQ5 protein and associates PYURF with COQ enzyme complex.

The protein resides in the mitochondrion inner membrane. The catalysed reaction is 2-methoxy-6-(all-trans-decaprenyl)benzene-1,4-diol + S-adenosyl-L-methionine = 5-methoxy-2-methyl-3-(all-trans-decaprenyl)benzene-1,4-diol + S-adenosyl-L-homocysteine + H(+). It functions in the pathway cofactor biosynthesis; ubiquinone biosynthesis. Methyltransferase required for the conversion of 2-decaprenyl-6-methoxy-1,4-benzoquinol (DDMQH2) to 2-decaprenyl-3-methyl-6-methoxy-1,4-benzoquinol (DMQH2). The chain is 2-methoxy-6-polyprenyl-1,4-benzoquinol methylase, mitochondrial from Mus musculus (Mouse).